Reading from the N-terminus, the 233-residue chain is Orotidine 5'-phosphate decarboxylase (233 aa).

Residues aspartate 11, lysine 34, 61–70, threonine 117, arginine 179, glutamine 188, glycine 208, and arginine 209 each bind substrate; that span reads DLKLHDIPNT. Catalysis depends on lysine 63, which acts as the Proton donor.

It belongs to the OMP decarboxylase family. Type 1 subfamily. Homodimer.

The enzyme catalyses orotidine 5'-phosphate + H(+) = UMP + CO2. It participates in pyrimidine metabolism; UMP biosynthesis via de novo pathway; UMP from orotate: step 2/2. Catalyzes the decarboxylation of orotidine 5'-monophosphate (OMP) to uridine 5'-monophosphate (UMP). This is Orotidine 5'-phosphate decarboxylase from Streptococcus pneumoniae (strain P1031).